Consider the following 194-residue polypeptide: Orotate phosphoribosyltransferase (194 aa).

116-124 (EDIVTTGLS) serves as a coordination point for 5-phospho-alpha-D-ribose 1-diphosphate. Orotate-binding residues include Thr-120 and Arg-148.

Belongs to the purine/pyrimidine phosphoribosyltransferase family. PyrE subfamily. In terms of assembly, homodimer. Mg(2+) is required as a cofactor.

It carries out the reaction orotidine 5'-phosphate + diphosphate = orotate + 5-phospho-alpha-D-ribose 1-diphosphate. It participates in pyrimidine metabolism; UMP biosynthesis via de novo pathway; UMP from orotate: step 1/2. In terms of biological role, catalyzes the transfer of a ribosyl phosphate group from 5-phosphoribose 1-diphosphate to orotate, leading to the formation of orotidine monophosphate (OMP). This Caulobacter vibrioides (strain ATCC 19089 / CIP 103742 / CB 15) (Caulobacter crescentus) protein is Orotate phosphoribosyltransferase.